Consider the following 61-residue polypeptide: MAKSSLKAKQKKHAKFSTRAYTRCELCGRVHAVLRKYKICRICFRELAHQGKIPGMKKASW.

Zn(2+)-binding residues include cysteine 24, cysteine 27, cysteine 40, and cysteine 43.

The protein belongs to the universal ribosomal protein uS14 family. Zinc-binding uS14 subfamily. Part of the 30S ribosomal subunit. Contacts proteins S3 and S10. Zn(2+) serves as cofactor.

Functionally, binds 16S rRNA, required for the assembly of 30S particles and may also be responsible for determining the conformation of the 16S rRNA at the A site. The protein is Small ribosomal subunit protein uS14 of Mycoplasmopsis agalactiae (strain NCTC 10123 / CIP 59.7 / PG2) (Mycoplasma agalactiae).